The chain runs to 270 residues: Urease accessory protein UreD (270 aa).

The protein belongs to the UreD family. As to quaternary structure, ureD, UreF and UreG form a complex that acts as a GTP-hydrolysis-dependent molecular chaperone, activating the urease apoprotein by helping to assemble the nickel containing metallocenter of UreC. The UreE protein probably delivers the nickel.

The protein localises to the cytoplasm. In terms of biological role, required for maturation of urease via the functional incorporation of the urease nickel metallocenter. This chain is Urease accessory protein UreD, found in Synechocystis sp. (strain ATCC 27184 / PCC 6803 / Kazusa).